We begin with the raw amino-acid sequence, 446 residues long: Exodeoxyribonuclease 7 large subunit (446 aa).

It belongs to the XseA family. In terms of assembly, heterooligomer composed of large and small subunits.

The protein localises to the cytoplasm. The catalysed reaction is Exonucleolytic cleavage in either 5'- to 3'- or 3'- to 5'-direction to yield nucleoside 5'-phosphates.. Bidirectionally degrades single-stranded DNA into large acid-insoluble oligonucleotides, which are then degraded further into small acid-soluble oligonucleotides. This chain is Exodeoxyribonuclease 7 large subunit, found in Streptococcus pneumoniae serotype 4 (strain ATCC BAA-334 / TIGR4).